Here is a 230-residue protein sequence, read N- to C-terminus: Ion-translocating oxidoreductase complex subunit E (230 aa).

6 consecutive transmembrane segments (helical) span residues 18–38 (ALVQLLGLCPLLAVTSTATNA), 39–59 (LGLGLATTLVLTLTNLTVSAL), 63–83 (TPAEIRIPIYVMIIASVVSAV), 86–106 (LINAYAFGLYQSLGIFIPLIV), 125–145 (WLSALDGFSIGMGATGAMFVL), and 182–202 (PFLLAMLPPGAFIGLGLMLAV).

Belongs to the NqrDE/RnfAE family. As to quaternary structure, the complex is composed of six subunits: RsxA, RsxB, RsxC, RsxD, RsxE and RsxG.

Its subcellular location is the cell inner membrane. Its function is as follows. Part of a membrane-bound complex that couples electron transfer with translocation of ions across the membrane. Required to maintain the reduced state of SoxR. The polypeptide is Ion-translocating oxidoreductase complex subunit E (Salmonella agona (strain SL483)).